Consider the following 1101-residue polypeptide: MRKASRSVGAAPKVPANNKSQATERSKSESSAPTASKVSRPGSSLSKAKSNDDLLAGMAGGLPASNSVKVKKNSTTSYPNSGTAMSGQEGRTRSSAGSSSNTKRSGSSGAKEVGSSRERLRERSRLTANKKPQGLGVGTGEVSAPSKRSRGRTDSDMIRMSKSKSDNQISDRAALEAKVKELMNLAKNKDAEILLLRTELRDTRSQLGQDVSDKSPDDLPLIHLQEQNTTVCEELQQLKSENRMLKDRLNALGFSLGQQPDDPDKLYGFQSLGINPGSHSDCGGGTLTSSVEGSAPGSMEDLLSQDESTLTGERRSSSMDNLDSECSEVYQPLTSSDDALDAPSSSSESEGLPSTERSRKGSSGNASEVSVACLTERIHQMEENQHSTAEELQATLQELADLQQITQELNSENERLGEEKVILMDSLCQQSDKLELFSRQLEYAQALLDEHHIAYSLDEDLKSSRYLDLEQRYMDLAENGRFEREQLLGVQQHLSNSLKMAEQDNKDAQDVIRALKERNHHMERIAEAEQLSKQALAATLEEYKATLNSEQGECARLKALLEQEKQRVAELYSIHSSGDASHIQNLLESVRSDKEKAESLASSLQEELLHARTDVNRMQDAFGKLEDEYRAFREEAQKQVSELTLALEKVRHELEEKETELSDMKETIFELEDEVEQHRAVKLHDNLIISDVENAVKKLQDQKHDMEREIKILNRKLREESAEWRQFQADLQTAVVIANDIKSEAQEEIGELKRQLQEALEKNEKLAKEMENATSRKQEEERGRVYNYMNAVERDLAALRQGMGLNRRSSTSSDPAPTVKTLIKSFDNASSQAAAVAAAAATPISRTPLSPSPMKTPPAAAVSPMQRHSISGPISVAKSLPGLSEKRPSYAEIPVQEHMLRSSSSSRSAASLPRVPAIDNAKSISVSRRSSEELKRDISVPDGSSAPSLMVMTSPSPQLSLSSSSPTASVTPTARSRIREERKDPLAALAREYGGSKRNALLKWCQKKTEGYPNIDITNFSSSWNDGLAFCALLHTYLPAHIPYQELTNQDKRRNFTLAFQAAESVGIKSTLDINEMVRTERPDWQCLMTYVTSIYKYFET.

Disordered stretches follow at residues M1–S170 and S280–A366. Polar residues-rich tracts occupy residues E29–A48 and A64–S86. The span at R93–A110 shows a compositional bias: low complexity. 2 stretches are compositionally biased toward basic and acidic residues: residues G114–R125 and G151–S165. Residues K162 to F254 adopt a coiled-coil conformation. The segment covering L333 to T355 has biased composition (low complexity). 2 coiled-coil regions span residues C373–L427 and Q492–V785. The tract at residues S923–I978 is disordered. A compositionally biased stretch (basic and acidic residues) spans R929–S939. Residues T953–R975 are compositionally biased toward low complexity. One can recognise a Calponin-homology (CH) domain in the interval G995–E1100.

Belongs to the cytospin-A family. May interact with both microtubules and actin cytoskeleton.

Its subcellular location is the cytoplasm. It localises to the cytoskeleton. The protein localises to the spindle. The protein resides in the cell junction. It is found in the gap junction. In terms of biological role, involved in cytokinesis and spindle organization. May play a role in actin cytoskeleton organization and microtubule stabilization and hence required for proper cell adhesion and migration. The polypeptide is Cytospin-A (specc1l) (Xenopus tropicalis (Western clawed frog)).